Consider the following 342-residue polypeptide: Flagellar P-ring protein (342 aa).

The N-terminal stretch at 1–19 (MKRVFLWLIFVLAFHKLLA) is a signal peptide.

Belongs to the FlgI family. The basal body constitutes a major portion of the flagellar organelle and consists of four rings (L,P,S, and M) mounted on a central rod.

The protein localises to the periplasm. It is found in the bacterial flagellum basal body. Its function is as follows. Assembles around the rod to form the L-ring and probably protects the motor/basal body from shearing forces during rotation. In Helicobacter pylori (strain G27), this protein is Flagellar P-ring protein.